A 313-amino-acid polypeptide reads, in one-letter code: ADP-L-glycero-D-manno-heptose-6-epimerase (313 aa).

Residues 10–11, 31–32, lysine 38, lysine 53, 75–79, and asparagine 92 contribute to the NADP(+) site; these read MI, DN, and EGACS. Tyrosine 139 (proton acceptor) is an active-site residue. Lysine 143 lines the NADP(+) pocket. Asparagine 174 serves as a coordination point for substrate. Valine 175 and lysine 183 together coordinate NADP(+). Lysine 183 functions as the Proton acceptor in the catalytic mechanism. Residues serine 185, histidine 192, 206–209, arginine 214, and tyrosine 277 each bind substrate; that span reads FEGS.

This sequence belongs to the NAD(P)-dependent epimerase/dehydratase family. HldD subfamily. Homopentamer. It depends on NADP(+) as a cofactor.

It catalyses the reaction ADP-D-glycero-beta-D-manno-heptose = ADP-L-glycero-beta-D-manno-heptose. Its pathway is nucleotide-sugar biosynthesis; ADP-L-glycero-beta-D-manno-heptose biosynthesis; ADP-L-glycero-beta-D-manno-heptose from D-glycero-beta-D-manno-heptose 7-phosphate: step 4/4. Its function is as follows. Catalyzes the interconversion between ADP-D-glycero-beta-D-manno-heptose and ADP-L-glycero-beta-D-manno-heptose via an epimerization at carbon 6 of the heptose. In Aliivibrio fischeri (strain MJ11) (Vibrio fischeri), this protein is ADP-L-glycero-D-manno-heptose-6-epimerase.